The primary structure comprises 1214 residues: Transient receptor potential cation channel subfamily M member 4 (1214 aa).

The Cytoplasmic portion of the chain corresponds to 1–782 (MVVPEKEQSW…FHFWGAPVTI (782 aa)). ATP is bound by residues Arg-171, Arg-214, and Leu-225. Asp-270, Ala-392, Asp-395, and Glu-396 together coordinate Ca(2+). Arg-421 and Gly-448 together coordinate ATP. The helical transmembrane segment at 783-803 (FMGNVVSYLLFLLLFSRVLLV) threads the bilayer. Topologically, residues 804–814 (DFQPAPPGSLE) are extracellular. Residues 815-835 (LLLYFWAFTLLCEELRQGLSG) form a helical membrane-spanning segment. Residues Glu-828 and Gln-831 each coordinate Ca(2+). At 836 to 863 (GGGSLASGGPGPGHASLSQRLRLYLADS) the chain is on the cytoplasmic side. A helical membrane pass occupies residues 864–884 (WNQCDLVALTCFLLGVGCRLT). Positions 865 and 868 each coordinate Ca(2+). Over 885–886 (PG) the chain is Extracellular. A helical transmembrane segment spans residues 887–910 (LYHLGRTVLCIDFMVFTVRLLHIF). At 911–930 (TVNKQLGPKIVIVSKMMKDV) the chain is on the cytoplasmic side. The chain crosses the membrane as a helical span at residues 931–951 (FFFLFFLGVWLVAYGVATEGL). The Extracellular portion of the chain corresponds to 952-963 (LRPRDSDFPSIL). Residues 964–984 (RRVFYRPYLQIFGQIPQEDMD) constitute an intramembrane region (pore-forming). The short motif at 975–977 (FGQ) is the Selectivity filter element. Over 985–1019 (VALMEHSNCSSEPGFWAHPPGAQAGTCVSQYANWL) the chain is Extracellular. Residue Asn-992 is glycosylated (N-linked (GlcNAc...) asparagine). A disulfide bond links Cys-993 and Cys-1011. Residues 1020 to 1040 (VVLLLVIFLLVANILLVNLLI) traverse the membrane as a helical segment. The Cytoplasmic portion of the chain corresponds to 1041–1214 (AMFSYTFGKV…PPPDLPGSKD (174 aa)). The interval 1076–1176 (APPFIVISHL…EYEQRLKVLE (101 aa)) is calmodulin-binding. Residues 1134–1187 (LARARDKRESDSERLKRTSQKVDLALKQLGHIREYEQRLKVLEREVQQCSRVLG) are a coiled coil. The mediates modulation by decavanadate and PIP2-binding stretch occupies residues 1136–1141 (RARDKR). 2 positions are modified to phosphoserine; by PKC: Ser-1145 and Ser-1152.

The protein belongs to the transient receptor (TC 1.A.4) family. LTrpC subfamily. TRPM4 sub-subfamily. Homotetramer. Post-translationally, phosphorylation by PKC leads to increase the sensitivity to Ca(2+). In terms of processing, sumoylated. Desumoylated by SENP1. Widely expressed with a high expression in intestine and prostate. In brain, it is both expressed in whole cerebral arteries and isolated vascular smooth muscle cells. Prominently expressed in Purkinje fibers. Expressed at higher levels in T-helper 2 (Th2) cells as compared to T-helper 1 (Th1) cells. Expressed in keratocytes.

It localises to the cell membrane. It is found in the endoplasmic reticulum. The protein localises to the golgi apparatus. It catalyses the reaction Na(+)(in) = Na(+)(out). It carries out the reaction K(+)(in) = K(+)(out). Its activity is regulated as follows. Displays weak voltage dependence, and repressed by decavanadate. Calmodulin-binding confers the Ca(2+) sensitivity. ATP is able to restore Ca(2+) sensitivity after desensitization. ATP inhibits channel activity. Phosphatidylinositol 4,5-bisphosphate (PIP2)-binding strongly enhances activity, by increasing the channel's Ca(2+) sensitivity and shifting its voltage dependence of activation towards negative potentials. Activity is also enhanced by 3,5-bis(trifluoromethyl)pyrazole derivative (BTP2). Exhibits pronounced temperature sensitivity, with activities strongly intensifying near physiological temperatures. Its function is as follows. Calcium-activated selective cation channel that mediates membrane depolarization. While it is activated by increase in intracellular Ca(2+), it is impermeable to it. Mediates transport of monovalent cations (Na(+) &gt; K(+) &gt; Cs(+) &gt; Li(+)), leading to depolarize the membrane. It thereby plays a central role in cadiomyocytes, neurons from entorhinal cortex, dorsal root and vomeronasal neurons, endocrine pancreas cells, kidney epithelial cells, cochlea hair cells etc. Participates in T-cell activation by modulating Ca(2+) oscillations after T lymphocyte activation, which is required for NFAT-dependent IL2 production. Involved in myogenic constriction of cerebral arteries. Controls insulin secretion in pancreatic beta-cells. May also be involved in pacemaking or could cause irregular electrical activity under conditions of Ca(2+) overload. Affects T-helper 1 (Th1) and T-helper 2 (Th2) cell motility and cytokine production through differential regulation of calcium signaling and NFATC1 localization. Enhances cell proliferation through up-regulation of the beta-catenin signaling pathway. Plays a role in keratinocyte differentiation. Lacks channel activity. This is Transient receptor potential cation channel subfamily M member 4 from Homo sapiens (Human).